The chain runs to 315 residues: Ankyrin repeat domain-containing protein SOWAHD (315 aa).

A disordered region spans residues 1–39; that stretch reads MAQLGGAANRAPTASLAPTSQSLRCAPQPRPSRADTGSL. ANK repeat units follow at residues 112-141, 147-162, and 186-216; these read PREH…ELLL, TGYS…GRHE, and GGLT…DATR.

This sequence belongs to the SOWAH family.

The protein is Ankyrin repeat domain-containing protein SOWAHD (SOWAHD) of Homo sapiens (Human).